Reading from the N-terminus, the 169-residue chain is Secreted LysM effector Blys5 (169 aa).

An N-terminal signal peptide occupies residues 1-19 (MKLSVISAVFVSLAAAAAA). 2 consecutive LysM domains span residues 47-94 (TYYQ…YYCV) and 121-167 (QWYK…NVCV).

It belongs to the secreted LysM effector family.

Its function is as follows. Secreted effector that enables the plant pathogenic fungus to manipulate host defenses for successful infection. Required for the full virulence to infect insect hosts. Protects fungal hyphae against the hydrolytic activity of chitinase and plays an important role in evasion of insect immunities. Binds chitin and can additionally bind chitosan and cellulose. Coats and protects the cell walls of insect pathogens from host cell recognition and additionally shields fungal cells from the hydrolysis of insect chitinases. In Beauveria bassiana (strain ARSEF 2860) (White muscardine disease fungus), this protein is Secreted LysM effector Blys5.